The primary structure comprises 541 residues: Sorting nexin-27 (541 aa).

Positions 1–42 (MADEDGEGIHPSAPHRNGGGGGGGGSGLHCAGNGGGGGGGPR) are disordered. Residues 17-41 (NGGGGGGGGSGLHCAGNGGGGGGGP) show a composition bias toward gly residues. Residues 43-136 (VVRIVKSESG…ELILTVLSVP (94 aa)) enclose the PDZ domain. Ser51 and Ser62 each carry phosphoserine. The 109-residue stretch at 161-269 (QAVPISVPRY…EFLSESDENY (109 aa)) folds into the PX domain. The region spanning 273–362 (SDVELRVALP…TCLTIRKWLF (90 aa)) is the Ras-associating domain. Residues 273 to 362 (SDVELRVALP…TCLTIRKWLF (90 aa)) form an FERM-like region F1 region. Residues 373 to 421 (NDLAVTYFFHQAVDDVKKGYIKAEEKSYQLQKLYEQRKMVMYLNMLRTC) are FERM-like region F2. Residues 425-525 (NEIIFPHCAC…RVFCELKWRK (101 aa)) are FERM-like region F3.

This sequence belongs to the sorting nexin family. In terms of assembly, core component of the SNX27-retromer, a multiprotein complex composed of SNX27, the WASH complex and the retromer complex. Interacts (via PDZ domain) with a number of target transmembrane proteins (via PDZ-binding motif): ABCC4, ADRB2, ARHGEF7, GRIA1, GRIA2, GRIN1, GRIN2A GRIN2C, KCNJ6, KCNJ9 and SLC2A1/GLUT1. Interacts (via the FERM-like regions) with the WASH complex. Interacts with SNX1. Interacts with CYTIP. Isoform 1 and isoform 2 directly interact with DGKZ. Isoform 1 and isoform 2 interact with HT4R isoform 5-HTA(A). Interacts with MCC. Interacts (via PDZ domains) with SLC9A3; directs SLC9A3 membrane insertion from early endosomes to the plasma membrane. Widely expressed. Expressed in cells of hematopoietic origin (at protein level).

It localises to the early endosome membrane. Its subcellular location is the cytoplasm. The protein resides in the cytosol. Involved in the retrograde transport from endosome to plasma membrane, a trafficking pathway that promotes the recycling of internalized transmembrane proteins. Following internalization, endocytosed transmembrane proteins are delivered to early endosomes and recycled to the plasma membrane instead of being degraded in lysosomes. SNX27 specifically binds and directs sorting of a subset of transmembrane proteins containing a PDZ-binding motif at the C-terminus: following interaction with target transmembrane proteins, associates with the retromer complex, preventing entry into the lysosomal pathway, and promotes retromer-tubule based plasma membrane recycling. SNX27 also binds with the WASH complex. Interacts with membranes containing phosphatidylinositol-3-phosphate (PtdIns(3P)). May participate in establishment of natural killer cell polarity. Recruits CYTIP to early endosomes. This Homo sapiens (Human) protein is Sorting nexin-27 (SNX27).